Reading from the N-terminus, the 1174-residue chain is MSFQTLERERTFKNPPKDGTSFPDLQKAVKPHVDSFNALTNAGLLNYAVKEIGEKCAFDSITQEEGGALKFGNKISFRVDEVQIAKPMLSSRERSSINRKVYPAEARERLTTYKSRLVLKFSWSVNGGPRQSEMREVGMIPIMVRSNRCHLEGLSPAELIAHKEESEEMGGYFIVNGIEKLIRMLILPKRNHPTAIIRPSFANRGTSYSQYGLSIRCVRPDQSSLTNTLHYLNNGVTMFRFHWRKNEYLIPSMMILKALLETSDKEIFEGIVGKDLGNTFLTDRVELMLRAYKSYGLYSQTETLQYLGSKFRVVLGVAEDLTDVEVGRFLLQKVVLVHLREAKDKFRLLLFMIRKLYALVAGECCADNPDSPQHQEILLGGFLYGQILKEKIEDWLNSIRAQINLDVRRSAPGVDFSDRKYLTRVFSKINNDIGTKLQYFLSTGNLVSNTGLDLQQATGYTVVAEKLNFYRFLSHFRMVHRGAFFAELKTTTVRKLLPEAWGFMCPVHTPDGSPCGLLNHLARKCEIVTHPSDVSQIPSLLLSLGVDPPSVVGHESGWGCVQLDGKIVGWCTYKLAKHVADVLRLMKIEYAVKLRNGTATEPAKVPLDLEIGYVPPSHNGQYPGLYLFSNPARMVRPVKHISTGELDMLGPFEQVYMDIACFPKEIVPKVSTHVEYSPTNVLSIVANMTPFSDFNQSPRNMYQCQMGKQTMGTPGTALRYRTDNKLYRLQTGQTPVVRPKLHNTYGLDHYPNGTNAVVAVISYTGYDMEDAMILNKSAHERGFGYGTVYKGESFDLSQKRRRGEPVVHHFGFAPGSTPRREWLQKLDADGLPFIGIKLEDGDPIVAYYDESTGQNFIETYHGTEPGFVDEVRLLGNDVGDSECQQIHVKLRITRSPIIGDKFSSRHGQKGICSQKWPTVDMPFTESGMQPDIIINPHAFPSRMTIGMFIESLAGKAGACHGLAQDSTPFIYSEQQTAADYFGEQLVKAGYNYHGNEPMYSGITGQEMKADIYIGVVYYQRLRHMVSDKFQVRTTGPIHNLTRQPVKGRKRAGGIRFGEMERDAVIGHGTSFLMQDRLMNCSDYAQSWVCRDCGSIISIMSTISMNGVGSASEVRCRSCAKPALGLEDTSDIWQDGSGKKFVGGTNTTLIALPSVFNYLTAELTAMNIKMMLEVK.

Basic and acidic residues predominate over residues 1–16; that stretch reads MSFQTLERERTFKNPP. The segment at 1 to 23 is disordered; the sequence is MSFQTLERERTFKNPPKDGTSFP. The C4-type zinc finger occupies 1089–1118; that stretch reads CRDCGSIISIMSTISMNGVGSASEVRCRSC.

This sequence belongs to the RNA polymerase beta chain family. In terms of assembly, component of the RNA polymerase I (Pol I) complex consisting of 14 subunits.

It localises to the nucleus. Its subcellular location is the nucleolus. The enzyme catalyses RNA(n) + a ribonucleoside 5'-triphosphate = RNA(n+1) + diphosphate. DNA-dependent RNA polymerase catalyzes the transcription of DNA into RNA using the four ribonucleoside triphosphates as substrates. Second largest core component of RNA polymerase I which synthesizes ribosomal RNA precursors. Proposed to contribute to the polymerase catalytic activity and forms the polymerase active center together with the largest subunit. Pol I is composed of mobile elements and RPA2 is part of the core element with the central large cleft and probably a clamp element that moves to open and close the cleft. The polypeptide is Probable DNA-directed RNA polymerase I subunit RPA2 (rpa2) (Schizosaccharomyces pombe (strain 972 / ATCC 24843) (Fission yeast)).